The primary structure comprises 49 residues: Small, acid-soluble spore protein K (49 aa).

Positions 1–49 are disordered; the sequence is MRNKSRGFPNMNNNKFEGEPRAKDDFASKRPDGSTNTHPQERMRASGKR. 2 stretches are compositionally biased toward basic and acidic residues: residues 16–32 and 39–49; these read FEGE…KRPD and PQERMRASGKR.

This sequence belongs to the SspK family.

It is found in the spore core. The polypeptide is Small, acid-soluble spore protein K (Bacillus licheniformis (strain ATCC 14580 / DSM 13 / JCM 2505 / CCUG 7422 / NBRC 12200 / NCIMB 9375 / NCTC 10341 / NRRL NRS-1264 / Gibson 46)).